Consider the following 270-residue polypeptide: Meiotic recombination 1 protein (270 aa).

In terms of domain architecture, KH spans 191 to 225; the sequence is EIKLNKTQITFLIGAKGTRIESLREKSGASIKIIP.

Its function is as follows. Required for chromosome pairing and genetic recombination. MER1 may function to bring the axial elements of the synaptonemal complex corresponding to homologous chromosomes together by initiating recombination. MER1 might be responsible for regulating the MER2 gene and/or gene product. This chain is Meiotic recombination 1 protein (MER1), found in Saccharomyces cerevisiae (strain ATCC 204508 / S288c) (Baker's yeast).